A 276-amino-acid chain; its full sequence is Putative translation initiation factor eIF-2B subunit 2-like (276 aa).

It belongs to the eIF-2B alpha/beta/delta subunits family. In terms of assembly, complex of two different subunits.

In terms of biological role, catalyzes the exchange of initiation factor 2-bound GDP for GTP. The protein is Putative translation initiation factor eIF-2B subunit 2-like of Pyrococcus horikoshii (strain ATCC 700860 / DSM 12428 / JCM 9974 / NBRC 100139 / OT-3).